Reading from the N-terminus, the 542-residue chain is GATA-type transcription factor sreA (542 aa).

The segment covering 1–10 (MLTLRSSSDT) has biased composition (polar residues). The interval 1-172 (MLTLRSSSDT…SAQNASGCGS (172 aa)) is disordered. Positions 44 to 63 (ADLRPDSFDASRSPDGDKAS) are enriched in basic and acidic residues. Composition is skewed to low complexity over residues 75–117 (SSDQ…PKAS) and 148–168 (SSTS…QNAS). A cystein-rich region (CRR) region spans residues 178–196 (CPGGGSCNGTGGAVGCDGC). The segment covering 210–223 (APSARQARASPSAQ) has biased composition (low complexity). The segment at 210 to 248 (APSARQARASPSAQTSEEQAQSGLDALDSASQDASGMPK) is disordered. The segment at 250–274 (CQNCGTTLTPLWRRDDQGNTICNAC) adopts a GATA-type zinc-finger fold. Residues 289 to 300 (MKKTVIKRRKRV) show a composition bias toward basic residues. 2 disordered regions span residues 289–408 (MKKT…PATR) and 461–525 (SNAP…REAE). Polar residues-rich tracts occupy residues 311–320 (AGSSDNSSVS) and 369–387 (KPTQ…NHSP). A compositionally biased stretch (low complexity) spans 396–407 (ESTSAESAPPAT). A compositionally biased stretch (polar residues) spans 464 to 483 (PARSQTQTQPQPGTRSYSPN). The stretch at 510 to 542 (DKVKAARRAQLQREAENMREALRAKERELASLK) forms a coiled coil.

The protein localises to the nucleus. Its function is as follows. GATA-type transcription repressor that regulates iron acquisition genes through specific binding the GATA sequence elements of target promoters. SreA targets include genes encoding a number of key iron-regulated factors such as the siderophore biosynthesis genes. Is dispensable for growth on keratin substrates. SreA represses the expression of hapX and the siderophore system during iron sufficient conditions by an iron-sensing mechanism, while hapX represses sreA and activates the siderophore system during iron-limiting conditions resulting in efficient iron uptake and inhibition of iron-consuming pathways. This Arthroderma benhamiae (strain ATCC MYA-4681 / CBS 112371) (Trichophyton mentagrophytes) protein is GATA-type transcription factor sreA.